We begin with the raw amino-acid sequence, 196 residues long: Probable malonic semialdehyde reductase RutE (196 aa).

This sequence belongs to the nitroreductase family. HadB/RutE subfamily. Requires FMN as cofactor.

The catalysed reaction is 3-hydroxypropanoate + NADP(+) = 3-oxopropanoate + NADPH + H(+). Functionally, may reduce toxic product malonic semialdehyde to 3-hydroxypropionic acid, which is excreted. In Escherichia coli (strain K12 / MC4100 / BW2952), this protein is Probable malonic semialdehyde reductase RutE.